We begin with the raw amino-acid sequence, 36 residues long: Pancreatic polypeptide (36 aa).

Residue Tyr-36 is modified to Tyrosine amide.

The protein belongs to the NPY family.

It localises to the secreted. Functionally, hormone secreted by pancreatic cells that acts as a regulator of pancreatic and gastrointestinal functions probably by signaling through the G protein-coupled receptor NPY4R2. The polypeptide is Pancreatic polypeptide (PPY) (Ceratotherium simum (White rhinoceros)).